The sequence spans 515 residues: Bifunctional purine biosynthesis protein PurH (515 aa).

The 145-residue stretch at 1 to 145 folds into the MGS-like domain; the sequence is MTKRVLISVS…KNHASVTVVV (145 aa).

Belongs to the PurH family.

The enzyme catalyses (6R)-10-formyltetrahydrofolate + 5-amino-1-(5-phospho-beta-D-ribosyl)imidazole-4-carboxamide = 5-formamido-1-(5-phospho-D-ribosyl)imidazole-4-carboxamide + (6S)-5,6,7,8-tetrahydrofolate. The catalysed reaction is IMP + H2O = 5-formamido-1-(5-phospho-D-ribosyl)imidazole-4-carboxamide. Its pathway is purine metabolism; IMP biosynthesis via de novo pathway; 5-formamido-1-(5-phospho-D-ribosyl)imidazole-4-carboxamide from 5-amino-1-(5-phospho-D-ribosyl)imidazole-4-carboxamide (10-formyl THF route): step 1/1. It participates in purine metabolism; IMP biosynthesis via de novo pathway; IMP from 5-formamido-1-(5-phospho-D-ribosyl)imidazole-4-carboxamide: step 1/1. The sequence is that of Bifunctional purine biosynthesis protein PurH from Streptococcus pneumoniae (strain 70585).